The primary structure comprises 198 residues: Segregation and condensation protein B (198 aa).

Positions 167–198 (PKLADPEAEDPDQSEMDLFFDRFNQSKEQEEE) are disordered. Acidic residues predominate over residues 172 to 181 (PEAEDPDQSE).

It belongs to the ScpB family. Homodimer. Homodimerization may be required to stabilize the binding of ScpA to the Smc head domains. Component of a cohesin-like complex composed of ScpA, ScpB and the Smc homodimer, in which ScpA and ScpB bind to the head domain of Smc. The presence of the three proteins is required for the association of the complex with DNA.

It localises to the cytoplasm. Functionally, participates in chromosomal partition during cell division. May act via the formation of a condensin-like complex containing Smc and ScpA that pull DNA away from mid-cell into both cell halves. The chain is Segregation and condensation protein B from Listeria innocua serovar 6a (strain ATCC BAA-680 / CLIP 11262).